An 816-amino-acid chain; its full sequence is Leucine--tRNA ligase (816 aa).

The 'HIGH' region motif lies at serine 40 to histidine 51. A 'KMSKS' region motif is present at residues lysine 576–serine 580. An ATP-binding site is contributed by lysine 579.

Belongs to the class-I aminoacyl-tRNA synthetase family.

It localises to the cytoplasm. It catalyses the reaction tRNA(Leu) + L-leucine + ATP = L-leucyl-tRNA(Leu) + AMP + diphosphate. This is Leucine--tRNA ligase from Clostridium beijerinckii (strain ATCC 51743 / NCIMB 8052) (Clostridium acetobutylicum).